The sequence spans 241 residues: Probable 2-phosphosulfolactate phosphatase (241 aa).

It belongs to the ComB family. The cofactor is Mg(2+).

It catalyses the reaction (2R)-O-phospho-3-sulfolactate + H2O = (2R)-3-sulfolactate + phosphate. The polypeptide is Probable 2-phosphosulfolactate phosphatase (Caldanaerobacter subterraneus subsp. tengcongensis (strain DSM 15242 / JCM 11007 / NBRC 100824 / MB4) (Thermoanaerobacter tengcongensis)).